Reading from the N-terminus, the 109-residue chain is Phosphoribosyl-ATP pyrophosphatase (109 aa).

Belongs to the PRA-PH family.

It is found in the cytoplasm. It catalyses the reaction 1-(5-phospho-beta-D-ribosyl)-ATP + H2O = 1-(5-phospho-beta-D-ribosyl)-5'-AMP + diphosphate + H(+). It functions in the pathway amino-acid biosynthesis; L-histidine biosynthesis; L-histidine from 5-phospho-alpha-D-ribose 1-diphosphate: step 2/9. This chain is Phosphoribosyl-ATP pyrophosphatase, found in Marinobacter nauticus (strain ATCC 700491 / DSM 11845 / VT8) (Marinobacter aquaeolei).